The sequence spans 915 residues: Transferrin-binding protein A (915 aa).

The signal sequence occupies residues 1 to 24 (MQQQHLFRFNILCLSLMTALPAYA). Over 25–187 (ENVQAGQAQE…ADDVIGEGRQ (163 aa)) the chain is Periplasmic. The TonB box motif lies at 38–45 (DTIQVKAK). Residues 51-176 (RDNEVTGLGK…LAGSVAFQTK (126 aa)) form the TBDR plug domain. The plug loop, interacts with transferrin stretch occupies residues 121–139 (SYTAQAALGGTRTAGSSGA). In terms of domain architecture, TBDR beta-barrel spans 187 to 915 (QWGIQSKTAY…NYTFSLEMKF (729 aa)). A beta stranded membrane pass occupies residues 188 to 197 (WGIQSKTAYS). At 198-203 (GKNRGL) the chain is on the extracellular side. The beta stranded transmembrane segment at 204–213 (TQSIALAGRI) threads the bilayer. Over 214-215 (GG) the chain is Periplasmic. A beta stranded membrane pass occupies residues 216–225 (AEALLIHTGR). Topologically, residues 226–309 (RAGEIRAHED…FLADPLSYES (84 aa)) are extracellular. A beta stranded membrane pass occupies residues 310–319 (RSWLFRPGFR). Over 320 to 324 (FENKR) the chain is Periplasmic. A beta stranded membrane pass occupies residues 325–334 (HYIGGILEHT). Over 335–406 (QQTFDTRDMT…VFYDETHTKS (72 aa)) the chain is Extracellular. The interval 351-361 (KAVFDANKKQA) is L3 helix finger, interacts with transferrin. The chain crosses the membrane as a beta stranded span at residues 407–415 (RYGLEYVYT). At 416 to 423 (NADKDTWA) the chain is on the periplasmic side. Residues 424-433 (DYARLSYDRQ) traverse the membrane as a beta stranded segment. The Extracellular segment spans residues 434 to 478 (GIGLDNHFQQTHCSADGSDKYCRPSADKPFSYYKSDRVIYGESHR). A beta stranded transmembrane segment spans residues 479–488 (LLQAAFKKSF). The Periplasmic portion of the chain corresponds to 489 to 494 (DTAKIR). Residues 495–504 (HNLSVNLGFD) traverse the membrane as a beta stranded segment. Residues 505–583 (RFGSNLRHQD…PRSINGKSYY (79 aa)) lie on the Extracellular side of the membrane. The interval 523–542 (AYSSNTPPQNNGKKISPNGS) is disordered. The chain crosses the membrane as a beta stranded span at residues 584 to 592 (AAVRDNVRL). At 593–594 (GR) the chain is on the periplasmic side. The beta stranded transmembrane segment at 595 to 603 (WADVGAGLR) threads the bilayer. Over 604–623 (YDYRSTHSDDGSVSTGTHRT) the chain is Extracellular. The beta stranded transmembrane segment at 624–633 (LSWNAGIVLK) threads the bilayer. The Periplasmic portion of the chain corresponds to 634 to 637 (PTDW). Residues 638–647 (LDLTYRTSTG) form a beta stranded membrane-spanning segment. Residues 648-675 (FRLPSFAEMYGWRAGVQSKAVKIDPEKS) lie on the Extracellular side of the membrane. Residues 676 to 685 (FNKEAGIVFK) form a beta stranded membrane-spanning segment. The Periplasmic portion of the chain corresponds to 686 to 689 (GDFG). A beta stranded transmembrane segment spans residues 690–699 (NLEASWFNNA). At 700-733 (YRDLIVRGYEAQIKDGKEEAKGDPAYLNAQSARI) the chain is on the extracellular side. The beta stranded transmembrane segment at 734 to 743 (TGINILGKID) threads the bilayer. At 744-755 (WNGVWDKLPEGW) the chain is on the periplasmic side. The chain crosses the membrane as a beta stranded span at residues 756–765 (YSTFAYNRVR). The Extracellular segment spans residues 766 to 790 (VRDIKKRADRTDIQSHLFDAIQPSR). Residues 791 to 799 (YVVGLGYDQ) form a beta stranded membrane-spanning segment. Over 800 to 802 (PEG) the chain is Periplasmic. A beta stranded transmembrane segment spans residues 803–811 (KWGVNGMLT). Over 812–845 (YSKAKEITELLGSRALLNGNSRNTKATARRTRPW) the chain is Extracellular. Residues 846 to 855 (YIVDVSGYYT) form a beta stranded membrane-spanning segment. Topologically, residues 856 to 860 (VKKHF) are periplasmic. The beta stranded transmembrane segment at 861 to 870 (TLRAGVYNLL) threads the bilayer. Residues 871 to 905 (NYRYVTWENVRQTAGGAVNQHKNVGVYNRYAAPGR) lie on the Extracellular side of the membrane. The TonB C-terminal box signature appears at 898–915 (NRYAAPGRNYTFSLEMKF). The chain crosses the membrane as a beta stranded span at residues 906–915 (NYTFSLEMKF).

It belongs to the TonB-dependent receptor family. Binds both human apo- and holo-transferrin (TF), via the TF C-terminus. Forms a large complex with TF and TbpB.

It is found in the cell outer membrane. Neisseria acquires iron by extracting it from serum transferrin (TF) in its human host. Acts as a TF receptor and is required for TF utilization. Binds both apo- and holo-TF, via the TF C-terminus. In Neisseria meningitidis serogroup B (strain ATCC BAA-335 / MC58), this protein is Transferrin-binding protein A.